Consider the following 376-residue polypeptide: Erythronate-4-phosphate dehydrogenase (376 aa).

Ser-45 and Thr-67 together coordinate substrate. NAD(+)-binding positions include Asp-147, 209 to 211 (ASR), and Asp-235. Arg-211 is an active-site residue. The active site involves Glu-240. The active-site Proton donor is His-257. Gly-260 lines the NAD(+) pocket. Tyr-261 contacts substrate.

It belongs to the D-isomer specific 2-hydroxyacid dehydrogenase family. PdxB subfamily. Homodimer.

The protein resides in the cytoplasm. The catalysed reaction is 4-phospho-D-erythronate + NAD(+) = (R)-3-hydroxy-2-oxo-4-phosphooxybutanoate + NADH + H(+). It participates in cofactor biosynthesis; pyridoxine 5'-phosphate biosynthesis; pyridoxine 5'-phosphate from D-erythrose 4-phosphate: step 2/5. Its function is as follows. Catalyzes the oxidation of erythronate-4-phosphate to 3-hydroxy-2-oxo-4-phosphonooxybutanoate. The chain is Erythronate-4-phosphate dehydrogenase from Aeromonas hydrophila subsp. hydrophila (strain ATCC 7966 / DSM 30187 / BCRC 13018 / CCUG 14551 / JCM 1027 / KCTC 2358 / NCIMB 9240 / NCTC 8049).